A 211-amino-acid polypeptide reads, in one-letter code: Large ribosomal subunit protein uL4 (211 aa).

The tract at residues 52–79 (GRAEVHGSNSKPYSQKGTGRARRGDKKS) is disordered. Positions 58–68 (GSNSKPYSQKG) are enriched in polar residues.

The protein belongs to the universal ribosomal protein uL4 family. As to quaternary structure, part of the 50S ribosomal subunit.

Its function is as follows. One of the primary rRNA binding proteins, this protein initially binds near the 5'-end of the 23S rRNA. It is important during the early stages of 50S assembly. It makes multiple contacts with different domains of the 23S rRNA in the assembled 50S subunit and ribosome. Forms part of the polypeptide exit tunnel. The protein is Large ribosomal subunit protein uL4 of Treponema denticola (strain ATCC 35405 / DSM 14222 / CIP 103919 / JCM 8153 / KCTC 15104).